Reading from the N-terminus, the 536-residue chain is Chlorophyllide a oxygenase, chloroplastic (536 aa).

The N-terminal 36 residues, 1 to 36, are a transit peptide targeting the chloroplast; the sequence is MNAAVFSPSALSLPISFSKTRSSFLSRKKGVKGEFR. Residues 123–150 are a coiled coil; sequence IGTVKKELAGLQEELSKAHQQVHISEAR. The Rieske domain maps to 221-321; sequence WYPVAFTADL…CLEQEGMIWI (101 aa). 4 residues coordinate [2Fe-2S] cluster: Cys262, His264, Cys281, and His284. Fe cation is bound by residues Asp360, Asp364, His367, and His372.

The protein resides in the plastid. Its subcellular location is the chloroplast membrane. It is found in the chloroplast thylakoid membrane. It carries out the reaction chlorophyllide a + 2 NADPH + 2 O2 + 2 H(+) = chlorophyllide b + 2 NADP(+) + 3 H2O. It participates in porphyrin-containing compound metabolism; chlorophyll biosynthesis. Its function is as follows. Catalyzes a two-step oxygenase reaction involved in the synthesis of chlorophyll b. Acts specifically on the non-esterified chlorophyllide a and not on chlorophyll a. In Arabidopsis thaliana (Mouse-ear cress), this protein is Chlorophyllide a oxygenase, chloroplastic (CAO).